The sequence spans 56 residues: Large ribosomal subunit protein eL40 (56 aa).

It belongs to the eukaryotic ribosomal protein eL40 family.

The polypeptide is Large ribosomal subunit protein eL40 (Saccharolobus islandicus (strain Y.N.15.51 / Yellowstone #2) (Sulfolobus islandicus)).